The sequence spans 20 residues: Probable cinnamyl alcohol dehydrogenase 1 (20 aa).

This sequence belongs to the zinc-containing alcohol dehydrogenase family. Requires Zn(2+) as cofactor.

It catalyses the reaction (E)-cinnamyl alcohol + NADP(+) = (E)-cinnamaldehyde + NADPH + H(+). It carries out the reaction (E)-coniferol + NADP(+) = (E)-coniferaldehyde + NADPH + H(+). The catalysed reaction is (E)-sinapyl alcohol + NADP(+) = (E)-sinapaldehyde + NADPH + H(+). The enzyme catalyses (E)-4-coumaroyl alcohol + NADP(+) = (E)-4-coumaraldehyde + NADPH + H(+). It catalyses the reaction (E)-caffeyl alcohol + NADP(+) = (E)-caffeyl aldehyde + NADPH + H(+). It participates in aromatic compound metabolism; phenylpropanoid biosynthesis. Its function is as follows. Involved in lignin biosynthesis. Catalyzes the final step specific for the production of lignin monomers, like coniferyl alcohol, sinapyl alcohol and 4-coumaryl alcohol. This Pseudotsuga menziesii (Douglas-fir) protein is Probable cinnamyl alcohol dehydrogenase 1.